A 758-amino-acid polypeptide reads, in one-letter code: 5-methyltetrahydropteroyltriglutamate--homocysteine methyltransferase (758 aa).

5-methyltetrahydropteroyltri-L-glutamate is bound by residues 16–19 and Lys-116; that span reads RELK. Residues 436 to 438 and Glu-489 each bind L-homocysteine; that span reads IGS. Residues 436–438 and Glu-489 contribute to the L-methionine site; that span reads IGS. Residues 520-521 and Trp-566 contribute to the 5-methyltetrahydropteroyltri-L-glutamate site; that span reads RC. Residue Asp-604 coordinates L-homocysteine. L-methionine is bound at residue Asp-604. Glu-610 is a 5-methyltetrahydropteroyltri-L-glutamate binding site. Zn(2+)-binding residues include His-646, Cys-648, and Glu-670. The Proton donor role is filled by His-699. Residue Cys-731 coordinates Zn(2+).

The protein belongs to the vitamin-B12 independent methionine synthase family. Zn(2+) serves as cofactor.

The enzyme catalyses 5-methyltetrahydropteroyltri-L-glutamate + L-homocysteine = tetrahydropteroyltri-L-glutamate + L-methionine. Its pathway is amino-acid biosynthesis; L-methionine biosynthesis via de novo pathway; L-methionine from L-homocysteine (MetE route): step 1/1. Its function is as follows. Catalyzes the transfer of a methyl group from 5-methyltetrahydrofolate to homocysteine resulting in methionine formation. The polypeptide is 5-methyltetrahydropteroyltriglutamate--homocysteine methyltransferase (Xylella fastidiosa (strain 9a5c)).